Here is a 929-residue protein sequence, read N- to C-terminus: LPS-assembly protein LptD (929 aa).

A signal peptide spans 1–24 (MKLRFIRSAGWLFLLFCLACNARA). The tract at residues 26-208 (LPPLSSKPEQ…EAGDEKLRLA (183 aa)) is disordered. Residues 44–74 (GDDKPVVIDTERIRGHHEYESGTRSESELRS) show a composition bias toward basic and acidic residues. The span at 154–164 (RTQSAPRTLSA) shows a compositional bias: polar residues. Positions 181 to 208 (DQDRPGFAEGERIGGHREEAGDEKLRLA) are enriched in basic and acidic residues.

The protein belongs to the LptD family. Component of the lipopolysaccharide transport and assembly complex. Interacts with LptE and LptA.

Its subcellular location is the cell outer membrane. Functionally, together with LptE, is involved in the assembly of lipopolysaccharide (LPS) at the surface of the outer membrane. The protein is LPS-assembly protein LptD of Nitrosospira multiformis (strain ATCC 25196 / NCIMB 11849 / C 71).